Consider the following 129-residue polypeptide: Small ribosomal subunit protein uS11 (129 aa).

The protein belongs to the universal ribosomal protein uS11 family. In terms of assembly, part of the 30S ribosomal subunit. Interacts with proteins S7 and S18. Binds to IF-3.

Located on the platform of the 30S subunit, it bridges several disparate RNA helices of the 16S rRNA. Forms part of the Shine-Dalgarno cleft in the 70S ribosome. The polypeptide is Small ribosomal subunit protein uS11 (Thermosipho melanesiensis (strain DSM 12029 / CIP 104789 / BI429)).